The following is a 433-amino-acid chain: Tol-Pal system protein TolB (433 aa).

The N-terminal stretch at 1 to 21 (MIKRLRGLLVLLCCVAGMAMA) is a signal peptide.

It belongs to the TolB family. The Tol-Pal system is composed of five core proteins: the inner membrane proteins TolA, TolQ and TolR, the periplasmic protein TolB and the outer membrane protein Pal. They form a network linking the inner and outer membranes and the peptidoglycan layer.

It is found in the periplasm. Functionally, part of the Tol-Pal system, which plays a role in outer membrane invagination during cell division and is important for maintaining outer membrane integrity. This chain is Tol-Pal system protein TolB, found in Pseudomonas entomophila (strain L48).